Here is a 594-residue protein sequence, read N- to C-terminus: A-type ATP synthase subunit A (594 aa).

Gly-236–Thr-243 provides a ligand contact to ATP.

It belongs to the ATPase alpha/beta chains family. In terms of assembly, has multiple subunits with at least A(3), B(3), C, D, E, F, H, I and proteolipid K(x).

Its subcellular location is the cell membrane. It catalyses the reaction ATP + H2O + 4 H(+)(in) = ADP + phosphate + 5 H(+)(out). Functionally, component of the A-type ATP synthase that produces ATP from ADP in the presence of a proton gradient across the membrane. The A chain is the catalytic subunit. This chain is A-type ATP synthase subunit A, found in Pyrobaculum calidifontis (strain DSM 21063 / JCM 11548 / VA1).